Reading from the N-terminus, the 354-residue chain is Soluble interferon alpha/beta receptor OPG204 (354 aa).

The N-terminal stretch at 1 to 22 is a signal peptide; that stretch reads MMKMTMKMMVHIYFVSLLLLLF. 2 consecutive Ig-like C2-type domains span residues 68–150 and 158–240; these read IGEP…RSHV and PEIY…IVVS. 2 disulfide bridges follow: Cys-76–Cys-132 and Cys-175–Cys-224. N-linked (GlcNAc...) asparagine; by host glycosylation is found at Asn-120, Asn-124, Asn-185, Asn-272, and Asn-324. The Ig-like V-type domain maps to 249-348; it reads PSQDHRFKLI…HNYYFEKTLT (100 aa). A disulfide bridge connects residues Cys-275 and Cys-336.

The protein belongs to the interleukin-1 receptor family. Interacts with host IFNA1.

The protein localises to the secreted. Functionally, counteracts the antiviral effects of host IFN-alpha/beta and key IFN-inducible proteins involved in viral RNA degradation suxh as host OAS1. Acts as a soluble IFN-alpha receptor and thus inhibits the interaction between host IFN-alpha and its receptor. In Homo sapiens (Human), this protein is Soluble interferon alpha/beta receptor OPG204 (OPG204).